A 512-amino-acid chain; its full sequence is Histidine ammonia-lyase (512 aa).

Positions alanine 144–glycine 146 form a cross-link, 5-imidazolinone (Ala-Gly). Serine 145 carries the 2,3-didehydroalanine (Ser) modification.

This sequence belongs to the PAL/histidase family. Contains an active site 4-methylidene-imidazol-5-one (MIO), which is formed autocatalytically by cyclization and dehydration of residues Ala-Ser-Gly.

It is found in the cytoplasm. The catalysed reaction is L-histidine = trans-urocanate + NH4(+). Its pathway is amino-acid degradation; L-histidine degradation into L-glutamate; N-formimidoyl-L-glutamate from L-histidine: step 1/3. The polypeptide is Histidine ammonia-lyase (Desulfotalea psychrophila (strain LSv54 / DSM 12343)).